The chain runs to 247 residues: Carboxy-S-adenosyl-L-methionine synthase (247 aa).

S-adenosyl-L-methionine is bound by residues Tyr40, 65-67 (GSS), 90-91 (DN), 122-123 (DI), Asn137, and Arg204.

Belongs to the class I-like SAM-binding methyltransferase superfamily. Cx-SAM synthase family. In terms of assembly, homodimer.

The enzyme catalyses prephenate + S-adenosyl-L-methionine = carboxy-S-adenosyl-L-methionine + 3-phenylpyruvate + H2O. Functionally, catalyzes the conversion of S-adenosyl-L-methionine (SAM) to carboxy-S-adenosyl-L-methionine (Cx-SAM). This Pseudomonas syringae pv. syringae (strain B728a) protein is Carboxy-S-adenosyl-L-methionine synthase.